The chain runs to 137 residues: MCALTSVALVSSAQLGMRWSMSRLPSPGQWLDLQDIGQVQSSAIAVICASITAYALSMLFWLLALRDLPLSRAYSLLSISYALVYTLAATLPFFHETFTVSKTVGVTLIVAGVLTINLRRISSPSLQDLSHENQRFR.

A run of 3 helical transmembrane segments spans residues 43 to 63, 74 to 94, and 98 to 118; these read AIAV…FWLL, YSLL…LPFF, and FTVS…TINL.

Belongs to the ArnF family. Heterodimer of ArnE and ArnF.

Its subcellular location is the cell inner membrane. It participates in bacterial outer membrane biogenesis; lipopolysaccharide biosynthesis. Its function is as follows. Translocates 4-amino-4-deoxy-L-arabinose-phosphoundecaprenol (alpha-L-Ara4N-phosphoundecaprenol) from the cytoplasmic to the periplasmic side of the inner membrane. This Pseudomonas savastanoi pv. phaseolicola (strain 1448A / Race 6) (Pseudomonas syringae pv. phaseolicola (strain 1448A / Race 6)) protein is Probable 4-amino-4-deoxy-L-arabinose-phosphoundecaprenol flippase subunit ArnF.